Consider the following 681-residue polypeptide: MKTTCLFISLILIQGIKTLPILEIASNNQPQNVDSVCSGTLQKTEDVHLMGFTLSGQKVADSPLEASKRWAFRTGVPPKNVEYTEGEEAKTCYNISVTDPSGKSLLLDPPTNIRDYPKCKTIHHIQGQNPHAQGIALHLWGAFFLYDRIASTTMYRGRVFTEGNIAAMIVNKTVHKMIFSRQGQGYRHMNLTSTNKYWTSNNGTQTNDTGCFGALQEYNSTKNQTCAPSKIPSPLPTARPEIKPTSTPTDATTLNTTDPNNDDEDLITSGSGSGEQEPYTTSDAVTKQGLSSTMPPTPSPQPSTPQQEGNNTDHSQGTVTEPNKTNTTAQPSMPPHNTTAISTNNTSKNNFSTLSVSLQNTTNYDTQSTATENEQTSAPSKTTLPPTGNLTTAKSTNNTKGPTTTAPNMTNGHLTSPSPTPNPTTQHLVYFRKKRSILWREGDMFPFLDGLINAPIDFDPVPNTKTIFDESSSSGASAEEDQHASPNISLTLSYFPNINENTAYSGENENDCDAELRIWSVQEDDLAAGLSWIPFFGPGIEGLYTAGLIKNQNNLVCRLRRLANQTAKSLELLLRVTTEERTFSLINRHAIDFLLTRWGGTCKVLGPDCCIGIEDLSRNISEQIDQIKKDEQKEGTGWGLGGKWWTSDWGVLTNLGILLLLSIAVLIALSCICRIFTKYIG.

The first 18 residues, 1-18, serve as a signal peptide directing secretion; sequence MKTTCLFISLILIQGIKT. Over 19 to 648 the chain is Extracellular; the sequence is LPILEIASNN…GLGGKWWTSD (630 aa). A receptor-binding region spans residues 38-188; the sequence is SGTLQKTEDV…FSRQGQGYRH (151 aa). 8 N-linked (GlcNAc...) asparagine; by host glycosylation sites follow: asparagine 94, asparagine 171, asparagine 190, asparagine 202, asparagine 207, asparagine 219, asparagine 223, and asparagine 255. The interval 223–351 is disordered; the sequence is NQTCAPSKIP…STNNTSKNNF (129 aa). Low complexity predominate over residues 244–259; that stretch reads PTSTPTDATTLNTTDP. Residues 277-455 are mucin-like region; the sequence is EPYTTSDAVT…PFLDGLINAP (179 aa). Polar residues-rich tracts occupy residues 278–290 and 308–341; these read PYTT…KQGL and EGNN…TTAI. N-linked (GlcNAc...) asparagine; by host glycans are attached at residues asparagine 310, asparagine 323, asparagine 326, asparagine 337, asparagine 344, asparagine 345, asparagine 350, asparagine 360, asparagine 389, asparagine 397, asparagine 408, and asparagine 487. The span at 342 to 351 shows a compositional bias: low complexity; that stretch reads STNNTSKNNF. Residues 366–414 show a composition bias toward polar residues; the sequence is TQSTATENEQTSAPSKTTLPPTGNLTTAKSTNNTKGPTTTAPNMTNGHL. The interval 366–425 is disordered; sequence TQSTATENEQTSAPSKTTLPPTGNLTTAKSTNNTKGPTTTAPNMTNGHLTSPSPTPNPTT. The segment at 529–549 is fusion peptide; the sequence is GLSWIPFFGPGIEGLYTAGLI. Asparagine 564 and asparagine 619 each carry an N-linked (GlcNAc...) asparagine; by host glycan. A helical membrane pass occupies residues 649–669; it reads WGVLTNLGILLLLSIAVLIAL. Over 670–681 the chain is Cytoplasmic; it reads SCICRIFTKYIG. 2 S-palmitoyl cysteine; by host lipidation sites follow: cysteine 671 and cysteine 673.

It belongs to the filoviruses glycoprotein family. As to quaternary structure, homotrimer; each monomer consists of a GP1 and a GP2 subunit linked by disulfide bonds. The resulting peplomers (GP1,2) protrude from the virus surface as spikes. GP1,2 interacts with human CD209 and CLEC4M (collectively referred to as DC-SIGN(R)). Asialoglycoprotein receptor (ASGP-R) may be a liver-specific receptor for GP1,2. Members of the Tyro3 receptor tyrosine kinase family may be cell entry factors interacting with GP1,2. N-glycosylated. Post-translationally, O-glycosylated in the mucin-like region. In terms of processing, specific enzymatic cleavages in vivo yield mature proteins. The precursor is processed into GP1 and GP2 by host cell furin in the trans Golgi, and maybe by other host proteases, to yield the mature GP1 and GP2 proteins. The cleavage site corresponds to the furin optimal cleavage sequence [KR]-X-[KR]-R. GP1 is phosphorylated on serine residues between residues 260 and 273.

The protein localises to the virion membrane. Its subcellular location is the host cell membrane. Its function is as follows. GP1 is responsible for binding to the receptor(s) on target cells. Interacts with CD209/DC-SIGN and CLEC4M/DC-SIGNR which act as cofactors for virus entry into the host cell. Binding to CD209 and CLEC4M, which are respectively found on dendritic cells (DCs), and on endothelial cells of liver sinusoids and lymph node sinuses, facilitate infection of macrophages and endothelial cells. These interactions not only facilitate virus cell entry, but also allow capture of viral particles by DCs and subsequent transmission to susceptible cells without DCs infection (trans infection). GP2 acts as a class I viral fusion protein. Under the current model, the protein has at least 3 conformational states: pre-fusion native state, pre-hairpin intermediate state, and post-fusion hairpin state. During viral and target cell membrane fusion, the coiled coil regions (heptad repeats) assume a trimer-of-hairpins structure, positioning the fusion peptide in close proximity to the C-terminal region of the ectodomain. The formation of this structure appears to drive apposition and subsequent fusion of viral and target cell membranes. Responsible for penetration of the virus into the cell cytoplasm by mediating the fusion of the membrane of the endocytosed virus particle with the endosomal membrane. Low pH in endosomes induces an irreversible conformational change in GP2, releasing the fusion hydrophobic peptide. The chain is Envelope glycoprotein (GP) from Lake Victoria marburgvirus (strain Popp-67) (MARV).